The chain runs to 669 residues: CoB--CoM heterodisulfide reductase iron-sulfur subunit A 1 (669 aa).

Position 153–176 (153–176 (GGGIAGIQAALDLADQGFKVYLVE)) interacts with FAD. A non-standard amino acid (selenocysteine) is located at residue U200. 4Fe-4S ferredoxin-type domains lie at 239 to 270 (KKPRYVDEDACTGCGVCAEVCPIEVPNEFDLG), 287 to 318 (LVYTIDMEHCIQCGLCEEACPQDPPAIDFDQE), 584 to 613 (ITATVDEDVCGGCGACAQVCPFDAIEMVEK), and 617 to 646 (RVAEVQDVACQGCGQCAAACPSGAMQLRYY). Positions 249, 252, 255, 259, 296, 299, 302, 306, 593, 596, 599, 603, 626, 629, 632, and 636 each coordinate [4Fe-4S] cluster.

This sequence belongs to the HdrA family. The ferredoxin:CoB-CoM heterodisulfide reductase is composed of three subunits; HdrA, HdrB and HdrC. It depends on [4Fe-4S] cluster as a cofactor. FAD is required as a cofactor.

It functions in the pathway cofactor metabolism; coenzyme M-coenzyme B heterodisulfide reduction; coenzyme B and coenzyme M from coenzyme M-coenzyme B heterodisulfide: step 1/1. Functionally, part of a complex that catalyzes the reversible reduction of CoM-S-S-CoB to the thiol-coenzymes H-S-CoM (coenzyme M) and H-S-CoB (coenzyme B). This Methanopyrus kandleri (strain AV19 / DSM 6324 / JCM 9639 / NBRC 100938) protein is CoB--CoM heterodisulfide reductase iron-sulfur subunit A 1 (hdrA1).